The following is a 965-amino-acid chain: Translation initiation factor IF-2 (965 aa).

The tract at residues 94–375 is disordered; sequence RTFVRRDEAA…RGKHQESTTF (282 aa). Residues 104 to 115 are compositionally biased toward low complexity; sequence EQAAEATGNGQE. Positions 121 to 177 are enriched in basic and acidic residues; the sequence is ELQRREEEARHEAELLEKQAQELKARQEQLAREEAERQAREQAAEAERRRAEEEAAK. The span at 181 to 191 shows a compositional bias: low complexity; it reads AAVAEAAAAAR. Residues 192 to 253 show a composition bias toward basic and acidic residues; that stretch reads EQAEQERASQ…KAEAEARAIR (62 aa). A compositionally biased stretch (pro residues) spans 267 to 276; sequence PEPPPKPAEA. Over residues 303–320 the composition is skewed to low complexity; it reads KKPAPAAAAQPAATTQPA. Residues 351 to 364 are compositionally biased toward gly residues; the sequence is TSGGVDRGWRGGPK. One can recognise a tr-type G domain in the interval 465–634; the sequence is PRPPVVTVMG…LLQAEVLELK (170 aa). Residues 474-481 form a G1 region; sequence GHVDHGKT. GTP is bound at residue 474–481; it reads GHVDHGKT. Residues 499-503 are G2; the sequence is GITQH. Residues 520-523 are G3; that stretch reads DTPG. Residues 520 to 524 and 574 to 577 contribute to the GTP site; these read DTPGH and NKID. A G4 region spans residues 574–577; the sequence is NKID. Residues 610–612 are G5; it reads SAK.

This sequence belongs to the TRAFAC class translation factor GTPase superfamily. Classic translation factor GTPase family. IF-2 subfamily.

Its subcellular location is the cytoplasm. In terms of biological role, one of the essential components for the initiation of protein synthesis. Protects formylmethionyl-tRNA from spontaneous hydrolysis and promotes its binding to the 30S ribosomal subunits. Also involved in the hydrolysis of GTP during the formation of the 70S ribosomal complex. This Paraburkholderia phymatum (strain DSM 17167 / CIP 108236 / LMG 21445 / STM815) (Burkholderia phymatum) protein is Translation initiation factor IF-2.